We begin with the raw amino-acid sequence, 111 residues long: MEKLYLDLLITGEDITLDSGNQPLICDNRISIAQDIKHAILESGLATQLIAERSRILRRDIILQMVLLVEEDVRLIPGTVSISEERLGQLFITAETYEFGRLDELELRLNE.

This is an uncharacterized protein from Haemophilus influenzae (Bacteriophage HP1).